The primary structure comprises 92 residues: Large ribosomal subunit protein eL31 (92 aa).

It belongs to the eukaryotic ribosomal protein eL31 family.

The polypeptide is Large ribosomal subunit protein eL31 (Haloquadratum walsbyi (strain DSM 16790 / HBSQ001)).